The sequence spans 316 residues: MADADDSLALRAAWLHFVAGMTQSAVAKRLGLPSVKAHRLIAKAVADGAVKVTIDGDITECIDLENRLADLYGLDYCEVAPDIGEEGLPLMALGHAGANFMRREIEHGDHEVIGIGHGRTLSAAVGYMPRVMANDLRFVSLLGGLTRNFAANPHDVMHRIAEKTGMPAYVMPVPFFANTAEDREVLLAQRGVTTVFDMGCRAELKIVGIGTVDAQAQLVTSGMIELGEVEEIANLGGVGEMLGHFFNANGQWLETALTGRTIAASVENADMSRIVALAGGLSKVDAIRAVLKSGRLYGLITDERTAKALIGQPNGK.

The segment at residues Q23–A42 is a DNA-binding region (H-T-H motif).

Belongs to the SorC transcriptional regulatory family.

With respect to regulation, erythritol may act as an inducer, probably by binding to EryD and inhibiting its repressor activity. Its function is as follows. Represses the expression of the eryABCD operon, which is involved in erythritol catabolism. The protein is Erythritol catabolism regulatory protein EryD of Brucella abortus (strain 2308).